The following is a 65-amino-acid chain: Large ribosomal subunit protein bL28 (65 aa).

A disordered region spans residues 1–21 (MAKKDQLTLRGPLYGNNRSHS).

It belongs to the bacterial ribosomal protein bL28 family.

The sequence is that of Large ribosomal subunit protein bL28 from Mycoplasma pneumoniae (strain ATCC 29342 / M129 / Subtype 1) (Mycoplasmoides pneumoniae).